Consider the following 174-residue polypeptide: Mitochondrial holo-[acyl-carrier-protein] synthase (174 aa).

It belongs to the P-Pant transferase superfamily. AcpS family.

It localises to the mitochondrion. It carries out the reaction apo-[ACP] + CoA = holo-[ACP] + adenosine 3',5'-bisphosphate + H(+). Functionally, transfers the 4'-phosphopantetheine moiety from coenzyme A to a Ser of mitochondrial acyl-carrier-protein. The sequence is that of Mitochondrial holo-[acyl-carrier-protein] synthase (PPT2) from Eremothecium gossypii (strain ATCC 10895 / CBS 109.51 / FGSC 9923 / NRRL Y-1056) (Yeast).